A 394-amino-acid polypeptide reads, in one-letter code: Argininosuccinate synthase (394 aa).

Position 8–16 (8–16 (AYSGGLDTS)) interacts with ATP. 2 residues coordinate L-citrulline: tyrosine 86 and serine 91. Glycine 116 serves as a coordination point for ATP. Threonine 118, asparagine 122, and aspartate 123 together coordinate L-aspartate. L-citrulline is bound at residue asparagine 122. 5 residues coordinate L-citrulline: arginine 126, serine 172, serine 181, glutamate 257, and tyrosine 269.

Belongs to the argininosuccinate synthase family. Type 1 subfamily. In terms of assembly, homotetramer.

The protein localises to the cytoplasm. It catalyses the reaction L-citrulline + L-aspartate + ATP = 2-(N(omega)-L-arginino)succinate + AMP + diphosphate + H(+). It functions in the pathway amino-acid biosynthesis; L-arginine biosynthesis; L-arginine from L-ornithine and carbamoyl phosphate: step 2/3. The polypeptide is Argininosuccinate synthase (Methanosarcina mazei (strain ATCC BAA-159 / DSM 3647 / Goe1 / Go1 / JCM 11833 / OCM 88) (Methanosarcina frisia)).